Here is a 172-residue protein sequence, read N- to C-terminus: 3-hydroxydecanoyl-[acyl-carrier-protein] dehydratase (172 aa).

His71 is an active-site residue.

This sequence belongs to the thioester dehydratase family. FabA subfamily. Homodimer.

It localises to the cytoplasm. The enzyme catalyses a (3R)-hydroxyacyl-[ACP] = a (2E)-enoyl-[ACP] + H2O. The catalysed reaction is (3R)-hydroxydecanoyl-[ACP] = (2E)-decenoyl-[ACP] + H2O. It carries out the reaction (2E)-decenoyl-[ACP] = (3Z)-decenoyl-[ACP]. The protein operates within lipid metabolism; fatty acid biosynthesis. In terms of biological role, necessary for the introduction of cis unsaturation into fatty acids. Catalyzes the dehydration of (3R)-3-hydroxydecanoyl-ACP to E-(2)-decenoyl-ACP and then its isomerization to Z-(3)-decenoyl-ACP. Can catalyze the dehydratase reaction for beta-hydroxyacyl-ACPs with saturated chain lengths up to 16:0, being most active on intermediate chain length. This Brucella anthropi (strain ATCC 49188 / DSM 6882 / CCUG 24695 / JCM 21032 / LMG 3331 / NBRC 15819 / NCTC 12168 / Alc 37) (Ochrobactrum anthropi) protein is 3-hydroxydecanoyl-[acyl-carrier-protein] dehydratase.